Consider the following 655-residue polypeptide: p-hydroxybenzoic acid efflux pump subunit AaeB (655 aa).

Transmembrane regions (helical) follow at residues 13 to 33 (FAVK…HFQL), 38 to 58 (WAVL…GGEP), 69 to 89 (LRII…IAMI), 93 to 113 (LLMI…SSLV), 121 to 141 (WGLA…EPLL), 152 to 172 (EIVI…PRSI), 370 to 390 (LFWL…IAVV), 407 to 427 (FIYG…VIIP), 431 to 451 (QSML…GIEV), 459 to 479 (MGAL…TFHF), and 482 to 502 (FLDS…VILL).

Belongs to the aromatic acid exporter ArAE (TC 2.A.85) family.

It is found in the cell inner membrane. Forms an efflux pump with AaeA. Could function as a metabolic relief valve, allowing to eliminate certain compounds when they accumulate to high levels in the cell. The sequence is that of p-hydroxybenzoic acid efflux pump subunit AaeB from Escherichia coli O6:K15:H31 (strain 536 / UPEC).